We begin with the raw amino-acid sequence, 280 residues long: Pantothenate synthetase (280 aa).

31-38 serves as a coordination point for ATP; it reads MGNLHAGH. His38 serves as the catalytic Proton donor. A (R)-pantoate-binding site is contributed by Gln62. Gln62 is a beta-alanine binding site. 150–153 is an ATP binding site; it reads GKKD. Gln156 is a binding site for (R)-pantoate. ATP-binding positions include Val179 and 187-190; that span reads MSSR.

The protein belongs to the pantothenate synthetase family. As to quaternary structure, homodimer.

Its subcellular location is the cytoplasm. The catalysed reaction is (R)-pantoate + beta-alanine + ATP = (R)-pantothenate + AMP + diphosphate + H(+). Its pathway is cofactor biosynthesis; (R)-pantothenate biosynthesis; (R)-pantothenate from (R)-pantoate and beta-alanine: step 1/1. Functionally, catalyzes the condensation of pantoate with beta-alanine in an ATP-dependent reaction via a pantoyl-adenylate intermediate. This Xanthomonas axonopodis pv. citri (strain 306) protein is Pantothenate synthetase.